The sequence spans 564 residues: Sphingomyelin phosphodiesterase 1 (564 aa).

Positions 1–17 are cleaved as a signal peptide; that stretch reads MRIIYLISTVLLIYTNA. Residues 37-121 form the Saposin B-type domain; it reads FQPLCISCTG…IILPDCADPT (85 aa). Disulfide bonds link Cys-41/Cys-117, Cys-44/Cys-110, and Cys-72/Cys-83. Asn-151 is a glycosylation site (N-linked (GlcNAc...) asparagine). Zn(2+) contacts are provided by Asp-165 and His-167. 2 disulfides stabilise this stretch: Cys-180/Cys-185 and Cys-186/Cys-206. A glycan (N-linked (GlcNAc...) asparagine) is linked at Asn-221. 2 residues coordinate Zn(2+): Asp-234 and Asn-274. Cys-341 and Cys-389 are joined by a disulfide. Residue Asn-351 is glycosylated (N-linked (GlcNAc...) asparagine). The Zn(2+) site is built by His-381, His-415, and His-417. An N-linked (GlcNAc...) asparagine glycan is attached at Asn-430. 2 cysteine pairs are disulfide-bonded: Cys-538–Cys-542 and Cys-548–Cys-561. A glycan (N-linked (GlcNAc...) asparagine) is linked at Asn-556.

It belongs to the acid sphingomyelinase family. The cofactor is Zn(2+).

The protein localises to the secreted. It carries out the reaction a sphingomyelin + H2O = phosphocholine + an N-acylsphing-4-enine + H(+). The catalysed reaction is an N-acyl-15-methylhexadecasphing-4-enine-1-phosphocholine + H2O = an N-acyl-15-methylhexadecasphing-4-enine + phosphocholine + H(+). It functions in the pathway lipid metabolism; sphingolipid metabolism. In terms of biological role, sphingomyelin phosphodiesterase (sphingomyelinase) that converts sphingomyelin to ceramide (N-acyl-sphingoid base) and phosphocholine at acidic pH. Displays its enzymatic activity when secreted. May play distinct roles in signaling. This chain is Sphingomyelin phosphodiesterase 1 (asm-1), found in Caenorhabditis elegans.